The sequence spans 121 residues: MNIVISKPDKNKIRQKRHRRVRGKISGTAARPRLNIFRSNTGIYAQVIDDVAGVTLASASTLDKEVSKGTKTEQAVVVGKLVAERAVAKGISEVVFDRGGYLYHGRVKALAESARENGLKF.

It belongs to the universal ribosomal protein uL18 family. Part of the 50S ribosomal subunit; part of the 5S rRNA/L5/L18/L25 subcomplex. Contacts the 5S and 23S rRNAs.

Its function is as follows. This is one of the proteins that bind and probably mediate the attachment of the 5S RNA into the large ribosomal subunit, where it forms part of the central protuberance. This Streptococcus suis (strain 98HAH33) protein is Large ribosomal subunit protein uL18.